A 384-amino-acid polypeptide reads, in one-letter code: Signal peptide peptidase-like 3 (384 aa).

The Lumenal segment spans residues 1–8; that stretch reads MAEQTYSW. The helical transmembrane segment at 9–29 threads the bilayer; that stretch reads AYSLVDSSQVSTFLISILLIV. Residues 30–73 lie on the Cytoplasmic side of the membrane; that stretch reads YGSFRSLNMDFENQDKEKDSNSSSGSFNGNSTNNSIQTIDSTQA. A helical membrane pass occupies residues 74-94; it reads LFLPIGASVSLLVMFFFFDSV. Gln-95 is a topological domain (lumenal). Residues 96–116 form a helical membrane-spanning segment; it reads VVFTICTAVLATIAFAFLLLP. Residues 117 to 138 lie on the Cytoplasmic side of the membrane; it reads MCQYLTRPCSPQNKISFGCCGR. A helical membrane pass occupies residues 139-159; the sequence is FTAAELLSFSLSVMLVLIWVL. Topologically, residues 160-164 are lumenal; it reads TGHWL. A helical membrane pass occupies residues 165 to 185; the sequence is LMDALAMGLCVAMIAFVRLPS. Over 186 to 190 the chain is Cytoplasmic; it reads LKVSC. The chain crosses the membrane as a helical span at residues 191-211; that stretch reads LLLSGLLIYDVFWVFFSAYIF. Residue Asp-200 is part of the active site. At 212-262 the chain is on the lumenal side; it reads NSNVMVKVATQPADNPLDVLSRKLHLGPNVGRDVPRLSLPGKLVFPSSTGS. Residues 263 to 283 traverse the membrane as a helical segment; it reads HFSMLGIGDIVMPGLLLCFVL. Residue Asp-271 is part of the active site. Residues 284 to 311 are Cytoplasmic-facing; the sequence is RYDNYKKQASGDSCGAPGPANISGRMQK. Residues 312 to 332 form a helical membrane-spanning segment; that stretch reads VSYFHCTLIGYFVGLLTATVA. Residues 333 to 339 lie on the Lumenal side of the membrane; it reads SRIHRAA. The helical transmembrane segment at 340–360 threads the bilayer; the sequence is QPALLYLVPFTLLPLLTMAYL. The PAL signature appears at 341–343; the sequence is PAL. Residues 361-384 are Cytoplasmic-facing; that stretch reads KGDLRRMWSEPFHSKSSSSRFLEV.

It belongs to the peptidase A22B family. As to quaternary structure, monomer. Homodimer. Interacts with STIM1 (via transmembrane region and SOAR/CAD domain); the interaction promotes the binding of STIM1 to ORAI1. Not glycosylated.

Its subcellular location is the endoplasmic reticulum membrane. The protein resides in the golgi apparatus. It is found in the membrane. With respect to regulation, its proteolytic activity is blocked by a signal peptide peptidase (SPP) inhibitor, (ZLL)2-ketone (ZLL) or a gamma-secretase inhibitor, LY411,575. Functionally, intramembrane-cleaving aspartic protease (I-CLiP) that cleaves type II membrane protein substrates in or close to their luminal transmembrane domain boundaries. Acts like a sheddase by mediating the proteolytic release and secretion of active site-containing ectodomains of glycan-modifiying glycosidase and glycosyltransferase enzymes such as MGAT5, B4GAT1 and B4GALT1. Plays a role in the regulation of cellular glycosylation processes. Required to link T-cell antigen receptor (TCR) and calcineurin-NFAT signaling cascades in lymphocytes by promoting the association of STIM1 and ORAI1 during store-operated calcium entry (SOCE) in a protease-independent manner. The sequence is that of Signal peptide peptidase-like 3 from Mus musculus (Mouse).